The chain runs to 296 residues: NAD kinase (296 aa).

D72 functions as the Proton acceptor in the catalytic mechanism. Residues 72–73 (DG), 146–147 (ND), R157, K174, D176, 187–192 (TAYALS), and Q247 contribute to the NAD(+) site.

Belongs to the NAD kinase family. Requires a divalent metal cation as cofactor.

Its subcellular location is the cytoplasm. It carries out the reaction NAD(+) + ATP = ADP + NADP(+) + H(+). Functionally, involved in the regulation of the intracellular balance of NAD and NADP, and is a key enzyme in the biosynthesis of NADP. Catalyzes specifically the phosphorylation on 2'-hydroxyl of the adenosine moiety of NAD to yield NADP. This Pseudomonas fluorescens (strain Pf0-1) protein is NAD kinase.